Here is a 147-residue protein sequence, read N- to C-terminus: Methylglyoxal synthase (147 aa).

In terms of domain architecture, MGS-like spans 4-147; it reads VSVPATKRIA…LLNFELLCES (144 aa). Substrate is bound by residues His-17, Lys-21, 43 to 46, and 63 to 64; these read TGTT and SG. Asp-69 functions as the Proton donor/acceptor in the catalytic mechanism. Substrate is bound at residue His-96.

It belongs to the methylglyoxal synthase family.

The catalysed reaction is dihydroxyacetone phosphate = methylglyoxal + phosphate. Catalyzes the formation of methylglyoxal from dihydroxyacetone phosphate. The sequence is that of Methylglyoxal synthase from Leptospira borgpetersenii serovar Hardjo-bovis (strain JB197).